A 65-amino-acid polypeptide reads, in one-letter code: U11-theraphotoxin-Cg1a (65 aa).

The signal sequence occupies residues 1–21 (MKTTILLVILGLTLLFALSAA). Positions 22 to 29 (TELKDEER) are excised as a propeptide. 3 cysteine pairs are disulfide-bonded: Cys-31–Cys-45, Cys-38–Cys-50, and Cys-44–Cys-57.

This sequence belongs to the neurotoxin 10 (Hwtx-1) family. 32 (Jztx-16) subfamily. Expressed by the venom gland.

Its subcellular location is the secreted. Its function is as follows. Probable ion channel inhibitor. This Chilobrachys guangxiensis (Chinese earth tiger tarantula) protein is U11-theraphotoxin-Cg1a.